Consider the following 416-residue polypeptide: MTIIEELGKKAKQASYDLLGLSTIEKNQMLTQLAKDLIEKSDFIIDENQKDLQKAEENGISEVMVDRLKLTAERIKGISEGVLQVAELEDPIGQVIKGYTNLDGLKIVQKRVPLGVIAMIFESRPNVSVDAFSLAFKTNNAIILRGGRDALHSNMALVQVIRETLIRLGHNPDAVQLLEDPSHDLAEALMSATEYVDVLIPRGGAKLIQTVKEKAKVPVIETGVGNVHIYVDATADLEMAKSIVINAKTQRPSVCNAAESLIIHEEVAENFIPLLEDAIEAVHKVEFRVDDKGYSLFKHAVKATENDYATEFLDYILSVKIVSSLDEAISWINRYTSHHSEAIVTRDIQAAERFQEEIDAAAVYVNASTRFTDGFVFGLGAEIGISTQKMHARGPMGLEALTSSKYYINGNGQIRE.

The protein belongs to the gamma-glutamyl phosphate reductase family.

The protein localises to the cytoplasm. It catalyses the reaction L-glutamate 5-semialdehyde + phosphate + NADP(+) = L-glutamyl 5-phosphate + NADPH + H(+). It functions in the pathway amino-acid biosynthesis; L-proline biosynthesis; L-glutamate 5-semialdehyde from L-glutamate: step 2/2. Its function is as follows. Catalyzes the NADPH-dependent reduction of L-glutamate 5-phosphate into L-glutamate 5-semialdehyde and phosphate. The product spontaneously undergoes cyclization to form 1-pyrroline-5-carboxylate. The chain is Gamma-glutamyl phosphate reductase from Streptococcus uberis (strain ATCC BAA-854 / 0140J).